A 900-amino-acid chain; its full sequence is UPF0182 protein Ppro_3567 (900 aa).

The next 7 helical transmembrane spans lie at 15 to 35, 60 to 80, 112 to 132, 174 to 194, 210 to 230, 257 to 277, and 282 to 302; these read FFPL…LLNL, GAGL…LHVA, VSML…AMKW, FIIL…GGIL, LAVL…LDSF, VLTF…WKGV, and LLAP…YPGV.

This sequence belongs to the UPF0182 family.

The protein resides in the cell membrane. The protein is UPF0182 protein Ppro_3567 of Pelobacter propionicus (strain DSM 2379 / NBRC 103807 / OttBd1).